Here is a 593-residue protein sequence, read N- to C-terminus: Translocon at the outer membrane of chloroplasts 64 (593 aa).

The Chloroplast intermembrane portion of the chain corresponds to 1 to 4; the sequence is MKSM. A helical transmembrane segment spans residues 5–25; that stretch reads ASPSSQIWVILGLGLAGIYVL. Residues 26–144 lie on the Cytoplasmic side of the membrane; it reads TRKLTQAVKE…NPAVPNRVPG (119 aa). Residues 145-165 form a helical membrane-spanning segment; the sequence is GSSSGAAVAVAANFVDFSLGV. At 166–403 the chain is on the chloroplast intermembrane side; that stretch reads DTSGGVRVPA…LSHDYQSRAL (238 aa). The helical transmembrane segment at 404-424 threads the bilayer; sequence SLLSIASISGCCQVTVPLGFF. The Cytoplasmic segment spans residues 425–593; it reads DKNPVSVSLI…SAERLRKLFQ (169 aa). TPR repeat units lie at residues 477-510, 511-544, and 545-578; these read AEIS…CGNN, ATYY…DKKN, and VKAY…EPTN.

In terms of assembly, part of the Toc complex and of the intermembrane space complex. Interacts with TOC12, TIC22 and with the cytosolic domain of TOC34 in a GTP dependent manner. Interacts (via TPR region) with HSP90 and with HSP70 with low efficiency.

It localises to the plastid. The protein resides in the chloroplast outer membrane. Its function is as follows. Chaperone receptor mediating Hsp90-dependent protein targeting to chloroplasts. Bi-functional preprotein receptor acting on both sides of the membrane. The sequence is that of Translocon at the outer membrane of chloroplasts 64 (TOC64) from Pisum sativum (Garden pea).